Reading from the N-terminus, the 283-residue chain is HTH-type transcriptional activator RhaR (283 aa).

In terms of domain architecture, HTH araC/xylS-type spans 179–277; sequence DLLMAALGNS…GVTPRVWRQQ (99 aa). DNA-binding regions (H-T-H motif) lie at residues 196-217 and 244-267; these read QHFCSHYQIAERPLRQLFRQQT and ISEIAARCGFEDSNYFSVVFTRET.

Binds DNA as a dimer.

The protein resides in the cytoplasm. Its function is as follows. Activates expression of the rhaSR operon in response to L-rhamnose. The chain is HTH-type transcriptional activator RhaR from Cronobacter sakazakii (strain ATCC BAA-894) (Enterobacter sakazakii).